Reading from the N-terminus, the 264-residue chain is Thiazole synthase (264 aa).

Lys-106 functions as the Schiff-base intermediate with DXP in the catalytic mechanism. 1-deoxy-D-xylulose 5-phosphate is bound by residues Gly-167, 193–194 (AG), and 215–216 (NS).

It belongs to the ThiG family. Homotetramer. Forms heterodimers with either ThiH or ThiS.

The protein localises to the cytoplasm. The catalysed reaction is [ThiS sulfur-carrier protein]-C-terminal-Gly-aminoethanethioate + 2-iminoacetate + 1-deoxy-D-xylulose 5-phosphate = [ThiS sulfur-carrier protein]-C-terminal Gly-Gly + 2-[(2R,5Z)-2-carboxy-4-methylthiazol-5(2H)-ylidene]ethyl phosphate + 2 H2O + H(+). Its pathway is cofactor biosynthesis; thiamine diphosphate biosynthesis. Catalyzes the rearrangement of 1-deoxy-D-xylulose 5-phosphate (DXP) to produce the thiazole phosphate moiety of thiamine. Sulfur is provided by the thiocarboxylate moiety of the carrier protein ThiS. In vitro, sulfur can be provided by H(2)S. In Azotobacter vinelandii (strain DJ / ATCC BAA-1303), this protein is Thiazole synthase.